We begin with the raw amino-acid sequence, 973 residues long: Peptidyl-glycine alpha-amidating monooxygenase (973 aa).

A signal peptide spans 1–20 (MAGRVPSLLVLLVFPSSCLA). Residues 1-494 (MAGRVPSLLV…EGTWEPEHTG (494 aa)) are peptidylglycine alpha-hydroxylating monooxygenase. Positions 21 to 30 (FRSPLSVFKR) are excised as a propeptide. Residues 31 to 863 (FKETTRPFSN…QKLIKEPGSG (833 aa)) lie on the Intragranular side of the membrane. 5 cysteine pairs are disulfide-bonded: Cys-42–Cys-181, Cys-76–Cys-121, Cys-109–Cys-126, Cys-222–Cys-329, and Cys-288–Cys-310. Cu(2+) contacts are provided by His-102 and His-103. Cu(2+)-binding residues include His-167, His-237, His-239, and Met-309. A peptidyl-alpha-hydroxyglycine alpha-amidating lyase region spans residues 495–817 (DFHMEEALDW…LTEKLEHRSV (323 aa)). NHL repeat units follow at residues 498-541 (MEEA…NSFD), 567-608 (AAVL…LDPN), 617-662 (LGRS…FSPS), and 670-714 (GEES…FKTD). Val-517 is a Ca(2+) binding site. An a protein-binding site is contributed by Arg-530. Residue His-582 participates in Zn(2+) binding. A Ca(2+)-binding site is contributed by Leu-584. The cysteines at positions 631 and 652 are disulfide-linked. Tyr-651 is a binding site for a protein. Residue His-687 participates in Zn(2+) binding. A disulfide bond links Cys-699 and Cys-710. Position 703 (Arg-703) interacts with a protein. An N-linked (GlcNAc...) asparagine glycan is attached at Asn-762. One copy of the NHL 5 repeat lies at 766-809 (GEIIDIFKPVRKHFDMPHDIVASEDGTVYIGDAHTNTVWKFTLT). His-783 contributes to the Zn(2+) binding site. Asp-784 contributes to the Ca(2+) binding site. The chain crosses the membrane as a helical span at residues 864–887 (VPVVLITTLLVIPVVVLLAIAIFI). Ile-875 and Arg-893 each carry sulfotyrosine. The Cytoplasmic portion of the chain corresponds to 888–973 (RWKKSRAFGD…PLPALAPSSS (86 aa)). Phosphoserine occurs at positions 918, 929, and 942. An interaction with RASSF9 region spans residues 925–942 (NFFASRKGYSRKGFDRLS). A disordered region spans residues 937 to 973 (GFDRLSTEGSDQEKEDDGSESEEEYSAPLPALAPSSS). Thr-943 is subject to Phosphothreonine. Ser-946 bears the Phosphoserine; by UHMK1; in vitro mark. Acidic residues predominate over residues 949 to 961 (EKEDDGSESEEEY). Ser-957 is subject to Phosphoserine. Residues 962–973 (SAPLPALAPSSS) show a composition bias toward low complexity.

The protein in the C-terminal section; belongs to the peptidyl-alpha-hydroxyglycine alpha-amidating lyase family. It in the N-terminal section; belongs to the copper type II ascorbate-dependent monooxygenase family. In terms of assembly, monomer. Interacts with RASSF9. It depends on Zn(2+) as a cofactor. Cu(2+) serves as cofactor.

It localises to the cytoplasmic vesicle. The protein localises to the secretory vesicle membrane. Its subcellular location is the membrane. It is found in the secreted. It catalyses the reaction a [peptide]-C-terminal glycine + 2 L-ascorbate + O2 = a [peptide]-C-terminal (2S)-2-hydroxyglycine + 2 monodehydro-L-ascorbate radical + H2O. It carries out the reaction a [peptide]-C-terminal (2S)-2-hydroxyglycine = a [peptide]-C-terminal amide + glyoxylate. The enzyme catalyses N-dodecanoylglycine + 2 L-ascorbate + O2 = N-dodecanoyl-(2S)-hydroxyglycine + 2 monodehydro-L-ascorbate radical + H2O. The catalysed reaction is N-dodecanoyl-(2S)-hydroxyglycine = dodecanamide + glyoxylate. It catalyses the reaction N-(9Z,12Z,15Z)-octadecatrienoylglycine + 2 L-ascorbate + O2 = N-(9Z,12Z,15Z)-octadecatrienoyl-(2S)-hydroxyglycine + 2 monodehydro-L-ascorbate radical + H2O. It carries out the reaction N-(9Z,12Z,15Z)-octadecatrienoyl-(2S)-hydroxyglycine = (9Z,12Z,15Z)-octadecatrienamide + glyoxylate. The enzyme catalyses N-(9Z-octadecenoyl)glycine + 2 L-ascorbate + O2 = N-(9Z-octadecenoyl)-(2S)-hydroxyglycine + 2 monodehydro-L-ascorbate radical + H2O. The catalysed reaction is N-(9Z-octadecenoyl)-(2S)-hydroxyglycine = (9Z)-octadecenamide + glyoxylate. It catalyses the reaction N-tetradecanoylglycine + 2 L-ascorbate + O2 = N-tetradecanoyl-(2S)-hydroxyglycine + 2 monodehydro-L-ascorbate radical + H2O. It carries out the reaction N-tetradecanoyl-(2S)-hydroxyglycine = tetradecamide + glyoxylate. The enzyme catalyses N-decanoylglycine + 2 L-ascorbate + O2 = N-decanoyl-(2S)-hydroxyglycine + 2 monodehydro-L-ascorbate radical + H2O. The catalysed reaction is N-decanoyl-(2S)-hydroxyglycine = decanamide + glyoxylate. It catalyses the reaction N-octanoylglycine + 2 L-ascorbate + O2 = N-octanoyl-(2S)-hydroxyglycine + 2 monodehydro-L-ascorbate radical + H2O. It carries out the reaction N-octanoyl-(2S)-hydroxyglycine = octanamide + glyoxylate. With respect to regulation, PAM activity is inhibited by EDTA, phenylglyoxal and diethyl pyrocarbonate. PAL activity is stimulated by cadmium and inhibited by mercury. Its function is as follows. Bifunctional enzyme that catalyzes amidation of the C-terminus of proteins. Alpha-amidation is present at the C-terminus of many endocrine hormones and neuropeptides and is required for their activity. C-terminal amidation also takes place in response to protein fragmentation triggered by oxidative stress, promoting degradation of amidated protein fragments by the proteasome. Alpha-amidation involves two sequential reactions, both of which are catalyzed by separate catalytic domains of the enzyme. The first step, catalyzed by peptidyl alpha-hydroxylating monooxygenase (PHM) domain, is the copper-, ascorbate-, and O2- dependent stereospecific hydroxylation (with S stereochemistry) at the alpha-carbon (C-alpha) of the C-terminal glycine of the peptidylglycine substrate. The second step, catalyzed by the peptidylglycine amidoglycolate lyase (PAL) domain, is the zinc-dependent cleavage of the N-C-alpha bond, producing the alpha-amidated peptide and glyoxylate. Similarly, catalyzes the two-step conversion of an N-fatty acylglycine to a primary fatty acid amide and glyoxylate. The polypeptide is Peptidyl-glycine alpha-amidating monooxygenase (Homo sapiens (Human)).